A 385-amino-acid polypeptide reads, in one-letter code: Transcription factor TGAL3 (385 aa).

The segment at 62–113 (LHALVGGGDGGDDAGEQRGADSSAVSKERRGDQKMQRRLAQNREAARKSRMR) is disordered. Basic and acidic residues predominate over residues 87–96 (SKERRGDQKM). The region spanning 93–137 (DQKMQRRLAQNREAARKSRMRKKAYIQQLESSRSKLMHLEQELQR) is the bZIP domain. The tract at residues 95–115 (KMQRRLAQNREAARKSRMRKK) is basic motif. The segment at 121–135 (LESSRSKLMHLEQEL) is leucine-zipper. In terms of domain architecture, DOG1 spans 162–382 (TLAFDLEYAR…RALSSLWLAR (221 aa)).

It belongs to the bZIP family. In terms of assembly, interacts with NPR1/NH1, NPR2/NH2 and NPR3/NH3.

Its subcellular location is the nucleus. In terms of biological role, transcriptional regulator involved in defense response. The protein is Transcription factor TGAL3 of Oryza sativa subsp. japonica (Rice).